The chain runs to 408 residues: Probable pectate lyase 18 (408 aa).

A signal peptide spans 1 to 24 (MKMQTKKLFITIVSFLLYAPLFLS). Asparagine 42 carries N-linked (GlcNAc...) asparagine glycosylation. The Ca(2+) site is built by aspartate 206, aspartate 230, and aspartate 234. Arginine 286 is an active-site residue.

The protein belongs to the polysaccharide lyase 1 family. The cofactor is Ca(2+). Expressed in flowers, but not in leaves.

It carries out the reaction Eliminative cleavage of (1-&gt;4)-alpha-D-galacturonan to give oligosaccharides with 4-deoxy-alpha-D-galact-4-enuronosyl groups at their non-reducing ends.. It functions in the pathway glycan metabolism; pectin degradation; 2-dehydro-3-deoxy-D-gluconate from pectin: step 2/5. This is Probable pectate lyase 18 from Arabidopsis thaliana (Mouse-ear cress).